The sequence spans 468 residues: Monogalactosyldiacylglycerol synthase 2, chloroplastic (468 aa).

UDP is bound by residues His82, Arg251, 361 to 365 (GTIAE), and Glu383.

It belongs to the glycosyltransferase 28 family. In terms of tissue distribution, expressed mainly in floral buds. Detected in roots, leaves, stems, siliques and pollen tubes.

Its subcellular location is the plastid. The protein localises to the chloroplast outer membrane. The catalysed reaction is a 1,2-diacyl-sn-glycerol + UDP-alpha-D-galactose = a 1,2-diacyl-3-O-(beta-D-galactosyl)-sn-glycerol + UDP + H(+). The enzyme catalyses 1,2-di-(9Z,12Z-octadecadienoyl)-sn-glycerol + UDP-alpha-D-galactose = 1,2-di-(9Z,12Z-octadecadienoyl)-3-beta-D-galactosyl-sn-glycerol + UDP + H(+). It catalyses the reaction 1-(9Z-octadecenoyl)-2-hexadecanoyl-sn-glycerol + UDP-alpha-D-galactose = 1-(9Z-octadecenoyl)-2-hexadecanoyl-3-beta-D-galactosyl-sn-glycerol + UDP + H(+). It carries out the reaction 1,2-di-(9Z-octadecenoyl)-sn-glycerol + UDP-alpha-D-galactose = 1,2-di-(9Z-octadecenoyl)-3-beta-D-galactosyl-sn-glycerol + UDP + H(+). With respect to regulation, inhibited by galvestine-1. In terms of biological role, involved in the synthesis of monogalactosyldiacylglycerol, the major structural component of photosynthetic membranes and in the chloroplast envelope biogenesis. Can use both prokaryotic (18:1/16:0) or eukaryotic (18:2/18:2) 1,2-diacylglycerol species, but operates with some preference for the eukaryotic one. Plays a minor role in galactolipid synthesis in chloroplasts. Is required for membrane lipid remodeling in phosphate-starved roots. Acts as the minor factor involved in digalactosyldiacylglycerol (DGDG) biosynthesis in phosphate-starved roots. Does not seem to be required for plant growth under nutrient-sufficient conditions. Required for membrane lipid remodeling in plants grown in acidic conditions. This chain is Monogalactosyldiacylglycerol synthase 2, chloroplastic, found in Arabidopsis thaliana (Mouse-ear cress).